The chain runs to 559 residues: Phenylalanine--tRNA ligase beta subunit (559 aa).

The B5 domain maps to 274–350 (FEPKIIDVHT…LGYGFNELPA (77 aa)). Positions 328, 334, 337, and 338 each coordinate Mg(2+).

This sequence belongs to the phenylalanyl-tRNA synthetase beta subunit family. Type 2 subfamily. In terms of assembly, tetramer of two alpha and two beta subunits. Requires Mg(2+) as cofactor.

It localises to the cytoplasm. The catalysed reaction is tRNA(Phe) + L-phenylalanine + ATP = L-phenylalanyl-tRNA(Phe) + AMP + diphosphate + H(+). This is Phenylalanine--tRNA ligase beta subunit from Methanosphaera stadtmanae (strain ATCC 43021 / DSM 3091 / JCM 11832 / MCB-3).